The sequence spans 383 residues: Interleukin-13 receptor subunit alpha-2 (383 aa).

The first 21 residues, 1 to 21 (MAFVHIRCLCFILLCTITGYS), serve as a signal peptide directing secretion. The Extracellular portion of the chain corresponds to 22 to 334 (LEIKVNPPQD…WEGYTGPDSK (313 aa)). Fibronectin type-III domains lie at 28 to 128 (PPQD…SDEG), 131 to 219 (ETKI…PIRS), and 234 to 332 (PPEF…TGPD). The cysteines at positions 59 and 107 are disulfide-linked. N-linked (GlcNAc...) asparagine glycosylation is present at N109. Residues C139 and C149 are joined by a disulfide bond. N162 carries an N-linked (GlcNAc...) asparagine glycan. Residues C178 and C191 are joined by a disulfide bond. N-linked (GlcNAc...) asparagine glycosylation is found at N209 and N293. An intrachain disulfide couples C263 to C310. Residues 316 to 320 (WSEWS) carry the WSXWS motif motif. The helical transmembrane segment at 335 to 355 (IIFIVPVCLFFIFLLLLLCLI) threads the bilayer. The Cytoplasmic portion of the chain corresponds to 356 to 383 (VEKEEPEPTLSLHVDLNKEVCAYEDTLC).

This sequence belongs to the type I cytokine receptor family. Type 5 subfamily. In terms of assembly, interacts with IL4RA. Interacts with high affinity to interleukin-13 (IL13), but not to interleukin-4 (IL4). Post-translationally, cleaved by MMP8 leading to a soluble form that is also able to interact with IL13.

Its subcellular location is the cell membrane. The protein resides in the secreted. Functionally, cell surface receptor that plays a role in the regulation of IL-13-mediated responses. Functions as a decoy receptor that inhibits IL-13- and IL-4-mediated signal transduction via the JAK-STAT pathway and thereby modulates immune responses and inflammation. Serves as a functional signaling receptor for IL-13 in an alternative pathway involving AP-1 ultimately leading to the production of TGFB1. The chain is Interleukin-13 receptor subunit alpha-2 (Il13ra2) from Mus musculus (Mouse).